A 223-amino-acid polypeptide reads, in one-letter code: Type III pantothenate kinase (223 aa).

Residue 17–24 participates in ATP binding; that stretch reads DIGNTRIH. Residues Y81 and 85 to 88 each bind substrate; that span reads GIDR. D87 (proton acceptor) is an active-site residue. D102 contributes to the K(+) binding site. S105 is an ATP binding site. T157 lines the substrate pocket.

The protein belongs to the type III pantothenate kinase family. In terms of assembly, homodimer. Requires NH4(+) as cofactor. K(+) serves as cofactor.

Its subcellular location is the cytoplasm. The enzyme catalyses (R)-pantothenate + ATP = (R)-4'-phosphopantothenate + ADP + H(+). It participates in cofactor biosynthesis; coenzyme A biosynthesis; CoA from (R)-pantothenate: step 1/5. With respect to regulation, not regulated by feedback inhibition by CoA and its thioesters as described for many other pantothenate kinases. Not inhibited by N-pentylpantothenamide (N5-Pan), and this compound cannot act as a substrate either. Its function is as follows. Catalyzes the phosphorylation of pantothenate (Pan), the first step in CoA biosynthesis. Can also utilize CTP or GTP instead of ATP as a phosphoryl donor, albeit to a lesser extent. This Helicobacter pylori (strain ATCC 700392 / 26695) (Campylobacter pylori) protein is Type III pantothenate kinase (coaX).